The chain runs to 64 residues: Large ribosomal subunit protein bL33c (64 aa).

Belongs to the bacterial ribosomal protein bL33 family.

Its subcellular location is the plastid. The protein localises to the chloroplast. The polypeptide is Large ribosomal subunit protein bL33c (Phaeodactylum tricornutum (strain CCAP 1055/1)).